The primary structure comprises 406 residues: MAAAVRQDLAQLMNSSGSHKDLAGKYRQILEKAIQLSGTEQLEALKAFVEAMVNENVSLVISRQLLTDFCTHLPNLPDSTAKEVYHFTLEKIQPRVISFEEQVASIRQHLASIYEKEEDWRNAAQVLVGIPLETGQKQYNVDYKLETYLKIARLYLEDDDPVQAEAYINRASLLQNESTNEQLQIHYKVCYARVLDYRRKFIEAAQRYNELSYKTIVHESERLEALKHALHCTILASAGQQRSRMLATLFKDERCQQLAAYGILEKMYLDRIIRGNQLQEFAAMLMPHQKATTADGSSILDRAVIEHNLLSASKLYNNITFEELGALLEIPAAKAEKIASQMITEGRMNGFIDQIDGIVHFETREALPTWDKQIQSLCFQVNNLLEKISQTAPEWTAQAMEAQMAQ.

The residue at position 2 (A2) is an N-acetylalanine. K25 is subject to N6-acetyllysine. Residues 197–366 enclose the PCI domain; it reads YRRKFIEAAQ…GIVHFETREA (170 aa).

Belongs to the CSN4 family. As to quaternary structure, component of the CSN complex, composed of COPS1/GPS1, COPS2, COPS3, COPS4, COPS5, COPS6, COPS7 (COPS7A or COPS7B), COPS8 and COPS9. In the complex, it probably interacts directly with COPS1, COPS2, COPS3, COPS5, COPS6, COPS7 (COPS7A or COPS7B) and COPS8. Interacts with TOR1A; the interaction is direct and associates TOR1A and SNAPIN with the CSN complex. Interacts with STON2; controls STON2 neddylation levels. Interacts with ERCC6.

The protein localises to the cytoplasm. It localises to the nucleus. It is found in the cytoplasmic vesicle. Its subcellular location is the secretory vesicle. The protein resides in the synaptic vesicle. In terms of biological role, component of the COP9 signalosome complex (CSN), a complex involved in various cellular and developmental processes. The CSN complex is an essential regulator of the ubiquitin (Ubl) conjugation pathway by mediating the deneddylation of the cullin subunits of SCF-type E3 ligase complexes, leading to decrease the Ubl ligase activity of SCF-type complexes such as SCF, CSA or DDB2. Also involved in the deneddylation of non-cullin subunits such as STON2. The complex is also involved in phosphorylation of p53/TP53, c-jun/JUN, IkappaBalpha/NFKBIA, ITPK1, IRF8/ICSBP and SNAPIN, possibly via its association with CK2 and PKD kinases. CSN-dependent phosphorylation of TP53 and JUN promotes and protects degradation by the Ubl system, respectively. This Mus musculus (Mouse) protein is COP9 signalosome complex subunit 4 (Cops4).